Reading from the N-terminus, the 603-residue chain is Terpenoid synthase 25 (603 aa).

Residues Asp356, Asp360, Asn500, Thr504, and Glu508 each contribute to the Mg(2+) site. The short motif at 356-360 (DDTCD) is the DDXXD motif element.

Belongs to the terpene synthase family. Tpsa subfamily. Requires Mg(2+) as cofactor. Mn(2+) is required as a cofactor. In terms of tissue distribution, predominantly expressed in roots but also in flowers.

The protein localises to the cytoplasm. It functions in the pathway secondary metabolite biosynthesis; terpenoid biosynthesis. Functionally, involved in terpene biosynthesis in roots. Possesses sesquiterpene (C15) synthase activity in vitro. Does not seem to be involved in diterpene (C20) biosynthesis. In Arabidopsis thaliana (Mouse-ear cress), this protein is Terpenoid synthase 25.